Reading from the N-terminus, the 636-residue chain is Chaperone protein DnaK (636 aa).

T198 carries the post-translational modification Phosphothreonine; by autocatalysis. Residues 600 to 636 (IAQQQAQAQQGSAEAGAQSQEDDVVDAEFEEVKDDKK) form a disordered region. Residues 601 to 618 (AQQQAQAQQGSAEAGAQS) show a composition bias toward low complexity. Acidic residues predominate over residues 619-636 (QEDDVVDAEFEEVKDDKK).

Belongs to the heat shock protein 70 family.

Functionally, acts as a chaperone. The polypeptide is Chaperone protein DnaK (Vibrio vulnificus (strain CMCP6)).